A 725-amino-acid polypeptide reads, in one-letter code: MEQSNDSLRVNHNDGEESKTSAQVFEHLICMDSRDSSFGQNDSPTVLPITTREANNSLISQNIPGPLTQTQTLSAEQFHLVDQNGQAIQYELQSLGESNAQMMIVASPTENGQVLRVIPPTQTGMAQVIIPQGQLVDVNSPRDVPEEKPSNRNLPTVRVDTLADNTSNYILHPQTSFPLPKKSVTGMLEEPLLGPLQPLSSNTPIWACRLRSCEKIGDSYRGYCVSETELESVLTFHKQQTQSVWGTRQSPSPAKPATRLMWKSQYVPYDGIPFVNAGSRAVVMECQYGPRRKGFQLKKVSEQESRSCQLYKATCPARIYIKKVQKFPEYRVPTDPKIDKKIIRMEQEKAFNMLKKNLVDAGGVLRWYVQLPTQQAHQYHELETPCLTLSPSPFPVSSLEEEETAVRDENCALPSRLHPQVAHKIQELVSQGIEQVYAVRKQLRKFVERELFKPDEVPERHNLSFFPTVNDIKNHIHEVQKSLRNGDTVYNSEIIPATLQWTTDSGNILKETMTVTFAEGNSPGESITTKVETNQTRGSLSPEPTHLLSSLSSFQPKIFTQLQGLQLQPRYTSPDESPAVVSVNNQPSSSPSGLLDTIGSAVMNNNSLLLGQSHSLQRDTCLTQNNSTASTMGNLPEPDQNLVAMDELVEVGDVEDTGNLEGTVHRILLGDVQTIPIQIIDNHSALIEENPESTISVSQVKQEPKEPALSMEAKKTVDYKKLSAT.

A disordered region spans residues 572–592 (TSPDESPAVVSVNNQPSSSPS). The segment covering 577-592 (SPAVVSVNNQPSSSPS) has biased composition (low complexity).

The protein resides in the nucleus. In terms of biological role, acts as a transcriptional activator that mediates the calcium- and neuron-selective induction of BDNF exon III transcription. Binds to the consensus calcium-response element CaRE1 5'-CTATTTCGAG-3' sequence. The polypeptide is Calcium-responsive transcription factor (CARF) (Homo sapiens (Human)).